A 343-amino-acid polypeptide reads, in one-letter code: Probable transposase for insertion sequence element (343 aa).

Belongs to the transposase mutator family.

Its function is as follows. Required for the transposition of the insertion element. In Corynebacterium diphtheriae, this protein is Probable transposase for insertion sequence element.